Consider the following 442-residue polypeptide: uncharacterized protein (442 aa).

The next 7 membrane-spanning stretches (helical) occupy residues F209–Y229, I247–S267, V284–C304, L308–W328, I342–I362, P374–P394, and F402–F422.

The protein localises to the membrane. This is an uncharacterized protein from Schizosaccharomyces pombe (strain 972 / ATCC 24843) (Fission yeast).